A 532-amino-acid chain; its full sequence is Zinc finger protein 350 (532 aa).

Positions 8–79 constitute a KRAB domain; the sequence is ITLEDVAVDF…EDGIHSGACS (72 aa). 8 consecutive C2H2-type zinc fingers follow at residues 206-228, 234-256, 262-284, 290-312, 318-340, 346-368, 374-396, and 402-424; these read HVCS…QVMH, HRCS…QRTH, YECP…QKTH, YICS…QRIH, YICN…QRFH, FVCS…QRIH, FECS…QRTH, and YGCN…KRIH. The span at 427–443 shows a compositional bias: basic and acidic residues; it reads EKQEAAKVENPPAERHS. Residues 427–465 form a disordered region; it reads EKQEAAKVENPPAERHSSLHTSDVMQEKNSANGATTQVP. Polar residues predominate over residues 445 to 465; that stretch reads LHTSDVMQEKNSANGATTQVP.

Belongs to the krueppel C2H2-type zinc-finger protein family. As to quaternary structure, interacts with BRCA1. Interacts with RNF11. Widely expressed.

It is found in the nucleus. Its subcellular location is the nucleus matrix. Functionally, transcriptional repressor. Binds to a specific sequence, 5'-GGGxxxCAGxxxTTT-3', within GADD45 intron 3. The sequence is that of Zinc finger protein 350 (ZNF350) from Homo sapiens (Human).